Reading from the N-terminus, the 346-residue chain is N-acetyl-gamma-glutamyl-phosphate reductase (346 aa).

Residue Cys-150 is part of the active site.

It belongs to the NAGSA dehydrogenase family. Type 1 subfamily.

It localises to the cytoplasm. The catalysed reaction is N-acetyl-L-glutamate 5-semialdehyde + phosphate + NADP(+) = N-acetyl-L-glutamyl 5-phosphate + NADPH + H(+). It functions in the pathway amino-acid biosynthesis; L-arginine biosynthesis; N(2)-acetyl-L-ornithine from L-glutamate: step 3/4. Its function is as follows. Catalyzes the NADPH-dependent reduction of N-acetyl-5-glutamyl phosphate to yield N-acetyl-L-glutamate 5-semialdehyde. The chain is N-acetyl-gamma-glutamyl-phosphate reductase from Desulforudis audaxviator (strain MP104C).